An 881-amino-acid polypeptide reads, in one-letter code: MKVTKPNWVEHTVGEKKAKTAIYSISVHPDGTRLATGGLDHKVKIWSTLPILDVEAEKEEENPKLLCTMSSHTGSVLSVRWAHHGRFLATGSDDQVIMIWGLDPDGGGRLWGSDEINVENWKALTRLVGHVADVVDLAWSRDDTMLASVGLDSTVWIWDGLTFERLRKLDLHQGFVKGVCWDPVGNYLATQSDDKTVKIWNTEDWSLAETISKPFETSPQSTFFRRLSWSPDGAFIAASNAMNGPVFVAAVIDREGWASDISFVGHENTIQVAAFNPRLFFPEGEPKGRATASSMLALGANDFSISIWRNTLYKPLVVLKDIFGADLMDLCWSNDGYVLYGSSVDGSVCAIQFEPSEFTDLADFSATELVLREYDYKPKRAHQPLAVHSSAASITNGFGPSTTTSTHVNVLQPKKGKAKRRVDLSNGNINAGPSAGPSRQALRPPPPVDPFSGPIQGFASPSTAQASTARMFEDAHRAFGPGSGSISGTSPRAGDKRKASGSYEDPTRGVRGRGMPVQQPIQQFEVQIIRAPMVAPSPSDAGPSKAYLPYPQVQSILRAQAIGNESRSIYLEARNTSDPKGENVLCYFADGEQRWMDYLPKAALAVTVTKNFCAAACEDGSLRVYSPAGRLILNMKLSGLVYDLQGEDKMLLIITMDCQVRVINVRNGKAFSPPSSIHHLLFPGSSSFHSFDIISCTVRPNGVPVIITSEPQAFAYDASLHEWSTIASPPIAGIQPLPSGPSGPLSVVDQIVAKSAPVTTTEKSNAPWIEESYVMSQFEMKLRGTVLLDSKEEHKHWLLGYMKYLGDENFAERAGEVMKDLIGPVYHQSKPTGWEPKLLGVDKREIAAEVLDVLSKTLQGKNVASVWYDVLDKMKADEGSW.

7 WD repeats span residues 17–56 (KAKT…DVEA), 71–110 (SHTG…GGRL), 129–168 (GHVA…RLRK), 171–210 (LHQG…LAET), 219–262 (PQST…SDIS), 265–318 (GHEN…PLVV), and 322–363 (IFGA…DLAD). Composition is skewed to polar residues over residues 398–409 (FGPSTTTSTHVN) and 459–468 (ASPSTAQAST). The segment at 398-514 (FGPSTTTSTH…DPTRGVRGRG (117 aa)) is disordered. 2 WD repeats span residues 588–635 (FADG…ILNM) and 688–733 (FHSF…PIAG).

Belongs to the WD repeat HIR1 family.

Its subcellular location is the nucleus. In terms of biological role, required for replication-independent chromatin assembly and for the periodic repression of histone gene transcription during the cell cycle. The sequence is that of Protein HIR1 (HIR1) from Cryptococcus neoformans var. neoformans serotype D (strain B-3501A) (Filobasidiella neoformans).